We begin with the raw amino-acid sequence, 542 residues long: Prolyl 3-hydroxylase OGFOD1 (542 aa).

One can recognise a Fe2OG dioxygenase domain in the interval 134–239 (DLESTIDMSC…RLSISGWFHG (106 aa)). Fe cation contacts are provided by histidine 155 and aspartate 157. Tyrosine 169 provides a ligand contact to 2-oxoglutarate. Residue histidine 218 participates in Fe cation binding. 2-oxoglutarate is bound at residue arginine 230. A disordered region spans residues 373-435 (EDEMNDKKEA…TKKESSVPTC (63 aa)). The span at 400–416 (ENNQTAISNNSQQSNEQ) shows a compositional bias: polar residues.

Belongs to the TPA1 family. Monomer. Requires Fe(2+) as cofactor. It depends on L-ascorbate as a cofactor.

The protein localises to the cytoplasm. The protein resides in the nucleus. The catalysed reaction is [ribosomal protein uS12]-L-proline + 2-oxoglutarate + O2 = [ribosomal protein uS12]-(3S)-3-hydroxy-L-proline + succinate + CO2. Functionally, prolyl 3-hydroxylase that catalyzes 3-hydroxylation of 'Pro-62' of small ribosomal subunit uS12 (RPS23), thereby regulating protein translation termination efficiency. Involved in stress granule formation. In Pongo abelii (Sumatran orangutan), this protein is Prolyl 3-hydroxylase OGFOD1 (OGFOD1).